The chain runs to 179 residues: ATP synthase subunit delta (179 aa).

It belongs to the ATPase delta chain family. In terms of assembly, F-type ATPases have 2 components, F(1) - the catalytic core - and F(0) - the membrane proton channel. F(1) has five subunits: alpha(3), beta(3), gamma(1), delta(1), epsilon(1). F(0) has three main subunits: a(1), b(2) and c(10-14). The alpha and beta chains form an alternating ring which encloses part of the gamma chain. F(1) is attached to F(0) by a central stalk formed by the gamma and epsilon chains, while a peripheral stalk is formed by the delta and b chains.

The protein localises to the cell inner membrane. In terms of biological role, f(1)F(0) ATP synthase produces ATP from ADP in the presence of a proton or sodium gradient. F-type ATPases consist of two structural domains, F(1) containing the extramembraneous catalytic core and F(0) containing the membrane proton channel, linked together by a central stalk and a peripheral stalk. During catalysis, ATP synthesis in the catalytic domain of F(1) is coupled via a rotary mechanism of the central stalk subunits to proton translocation. Its function is as follows. This protein is part of the stalk that links CF(0) to CF(1). It either transmits conformational changes from CF(0) to CF(1) or is implicated in proton conduction. This Burkholderia cenocepacia (strain ATCC BAA-245 / DSM 16553 / LMG 16656 / NCTC 13227 / J2315 / CF5610) (Burkholderia cepacia (strain J2315)) protein is ATP synthase subunit delta.